We begin with the raw amino-acid sequence, 412 residues long: Flap endonuclease 1-B (412 aa).

Residues 1–105 are N-domain; it reads MGIKGLTKLL…KELAKRSLKR (105 aa). Aspartate 34 is a binding site for Mg(2+). Arginine 71 contacts DNA. Mg(2+) contacts are provided by aspartate 87, glutamate 159, glutamate 161, aspartate 180, and aspartate 182. The I-domain stretch occupies residues 123 to 254; it reads LIEKFSKRTV…QRALKLIRQH (132 aa). Glutamate 159 lines the DNA pocket. 2 residues coordinate DNA: glycine 232 and aspartate 234. Position 234 (aspartate 234) interacts with Mg(2+).

Belongs to the XPG/RAD2 endonuclease family. FEN1 subfamily. In terms of assembly, interacts with PCNA. Three molecules of FEN1 bind to one PCNA trimer with each molecule binding to one PCNA monomer. PCNA stimulates the nuclease activity without altering cleavage specificity. It depends on Mg(2+) as a cofactor. In terms of processing, phosphorylated. Phosphorylation upon DNA damage induces relocalization to the nuclear plasma.

It localises to the nucleus. Its subcellular location is the nucleolus. It is found in the nucleoplasm. The protein resides in the mitochondrion. Functionally, structure-specific nuclease with 5'-flap endonuclease and 5'-3' exonuclease activities involved in DNA replication and repair. During DNA replication, cleaves the 5'-overhanging flap structure that is generated by displacement synthesis when DNA polymerase encounters the 5'-end of a downstream Okazaki fragment. It enters the flap from the 5'-end and then tracks to cleave the flap base, leaving a nick for ligation. Also involved in the long patch base excision repair (LP-BER) pathway, by cleaving within the apurinic/apyrimidinic (AP) site-terminated flap. Acts as a genome stabilization factor that prevents flaps from equilibrating into structures that lead to duplications and deletions. Also possesses 5'-3' exonuclease activity on nicked or gapped double-stranded DNA, and exhibits RNase H activity. Also involved in replication and repair of rDNA and in repairing mitochondrial DNA. The chain is Flap endonuclease 1-B from Oryza sativa subsp. indica (Rice).